A 366-amino-acid chain; its full sequence is Dof zinc finger protein DOF1.3 (366 aa).

A disordered region spans residues 22–103 (DPYSSSSHVL…KTTELKKPDK (82 aa)). Composition is skewed to low complexity over residues 25–45 (SSSS…SLSL) and 56–69 (TDNT…NLNN). Basic and acidic residues-rich tracts occupy residues 70-83 (ESKE…DQHS) and 91-103 (EEEK…KPDK). A Dof-type zinc finger spans residues 105-159 (LPCPRCNSADTKFCYYNNYNVNQPRHFCRKCQRYWTAGGSMRIVPVGSGRRKNKG). The Zn(2+) site is built by C107, C110, C132, and C135.

It localises to the nucleus. Its function is as follows. Transcription factor that binds specifically to a 5'-AA[AG]G-3' consensus core sequence. The protein is Dof zinc finger protein DOF1.3 (DOF1.3) of Arabidopsis thaliana (Mouse-ear cress).